Here is a 412-residue protein sequence, read N- to C-terminus: Argininosuccinate synthase (412 aa).

ATP-binding positions include 10–18 (AYSGGLDTS) and Ala36. Positions 87 and 92 each coordinate L-citrulline. The residue at position 87 (Tyr87) is a Phosphotyrosine. Lys112 carries the post-translational modification N6-acetyllysine. Tyr113 is modified (phosphotyrosine). 115–123 (SHGATGKGN) is an ATP binding site. Residues Thr119, Asn123, and Asp124 each coordinate L-aspartate. Asn123 contacts L-citrulline. Arg127 contributes to the L-citrulline binding site. 2 positions are modified to N6-acetyllysine; by CLOCK: Lys165 and Lys176. Residues Ser180 and Ser189 each coordinate L-citrulline. Ser180 is subject to Phosphoserine. Phosphothreonine is present on Thr219. L-citrulline is bound by residues Glu270 and Tyr282.

This sequence belongs to the argininosuccinate synthase family. Type 1 subfamily. As to quaternary structure, homotetramer. Interacts with NMRAL1. Interacts with CLOCK; in a circadian manner. Forms tissue-specific complexes with ASL, SLC7A1, HSP90AA1 and nitric oxide synthase NOS1, NOS2 or NOS3; the complex regulates cell-autonomous L-arginine synthesis and citrulline recycling while channeling extracellular L-arginine to nitric oxide synthesis pathway. Acetylated by CLOCK in a circadian manner which negatively regulates its enzyme activity. Deacetylated by histone deacetylases. As to expression, expressed in adult liver.

It localises to the cytoplasm. The protein resides in the cytosol. The catalysed reaction is L-citrulline + L-aspartate + ATP = 2-(N(omega)-L-arginino)succinate + AMP + diphosphate + H(+). It functions in the pathway amino-acid biosynthesis; L-arginine biosynthesis; L-arginine from L-ornithine and carbamoyl phosphate: step 2/3. Its pathway is nitrogen metabolism; urea cycle; (N(omega)-L-arginino)succinate from L-aspartate and L-citrulline: step 1/1. In terms of biological role, one of the enzymes of the urea cycle, the metabolic pathway transforming neurotoxic amonia produced by protein catabolism into inocuous urea in the liver of ureotelic animals. Catalyzes the formation of arginosuccinate from aspartate, citrulline and ATP and together with ASL it is responsible for the biosynthesis of arginine in most body tissues. The protein is Argininosuccinate synthase of Homo sapiens (Human).